Here is a 492-residue protein sequence, read N- to C-terminus: MTKYETVIGLEVHVQLDTKSKMFCRCSTDYASAEPNTHVCPVCLGMPGVLPTINKQAVEYTIMSGLALGCDIAPFTKFDRKNYAYPDLMKGYQISQYDQPLCGKGFLDINVDGVIRRIGITRIHLEEDVAKLHHESDINGQPYSLLDINRSSIPLMEVVSEPDMRTPEEARQYLMKLRTIMRYLGVSTANMEEGSFRCDANISIRPVGATELGAKVEVKNMNSFKAVFSALEYEEVRQRKMADEGKKISQETRGWQDEKCQTVSQRSKEFAHDYRYFPEPDLPPLHISCDWIEDIRAKLPELPETRKERFINGYWLSEYDASLLTASRELADYFEAVLGETDFQNIPQDKGVKEVANWVVGSVNSIMNTGGADITAFALKVSPASLCHLLVLVSAGKVNAATAKAVLEDMYATGQNAEAIIEKKGLSQISDSSELVAIAKKVLADNPKAVAEYNEGKTQVIGFLVGQMMKQSKGRANPNIAMELLKKALEEG.

This sequence belongs to the GatB/GatE family. GatB subfamily. Heterotrimer of A, B and C subunits.

The catalysed reaction is L-glutamyl-tRNA(Gln) + L-glutamine + ATP + H2O = L-glutaminyl-tRNA(Gln) + L-glutamate + ADP + phosphate + H(+). It catalyses the reaction L-aspartyl-tRNA(Asn) + L-glutamine + ATP + H2O = L-asparaginyl-tRNA(Asn) + L-glutamate + ADP + phosphate + 2 H(+). In terms of biological role, allows the formation of correctly charged Asn-tRNA(Asn) or Gln-tRNA(Gln) through the transamidation of misacylated Asp-tRNA(Asn) or Glu-tRNA(Gln) in organisms which lack either or both of asparaginyl-tRNA or glutaminyl-tRNA synthetases. The reaction takes place in the presence of glutamine and ATP through an activated phospho-Asp-tRNA(Asn) or phospho-Glu-tRNA(Gln). The sequence is that of Aspartyl/glutamyl-tRNA(Asn/Gln) amidotransferase subunit B from Dehalococcoides mccartyi (strain CBDB1).